A 79-amino-acid polypeptide reads, in one-letter code: Dolichyl-diphosphooligosaccharide--protein glycosyltransferase subunit TMEM258 (79 aa).

Transmembrane regions (helical) follow at residues 19-39 (PLLT…FTMI) and 55-75 (FIAA…LLWV).

Belongs to the OST5 family. Component of the oligosaccharyltransferase (OST) complex.

The protein resides in the membrane. The protein operates within protein modification; protein glycosylation. Its function is as follows. Subunit of the oligosaccharyl transferase (OST) complex that catalyzes the initial transfer of a defined glycan (Glc(3)Man(9)GlcNAc(2) in eukaryotes) from the lipid carrier dolichol-pyrophosphate to an asparagine residue within an Asn-X-Ser/Thr consensus motif in nascent polypeptide chains, the first step in protein N-glycosylation. N-glycosylation occurs cotranslationally and the complex associates with the Sec61 complex at the channel-forming translocon complex that mediates protein translocation across the endoplasmic reticulum (ER). All subunits are required for a maximal enzyme activity. In Caenorhabditis elegans, this protein is Dolichyl-diphosphooligosaccharide--protein glycosyltransferase subunit TMEM258.